The primary structure comprises 1938 residues: Histone-lysine N-methyltransferase SETD1B (1938 aa).

A compositionally biased stretch (basic and acidic residues) spans Met1 to Arg20. Residues Met1–Ser44 form a disordered region. An RRM domain is found at Asp111–Lys199. Disordered stretches follow at residues Leu226–Phe357, Phe369–Ala484, Leu496–Pro630, Gly652–Pro688, Lys916–Val1125, His1147–Asp1174, Met1187–Glu1206, Lys1327–Leu1373, Phe1413–Met1468, Glu1496–Pro1528, and Asp1744–Glu1772. 4 stretches are compositionally biased toward polar residues: residues Val254 to Pro290, Pro298 to Pro312, Leu375 to Ser407, and Asp446 to Gln457. The segment covering Ser512–Ser531 has biased composition (low complexity). Polar residues-rich tracts occupy residues His532–Gly546 and Ser569–Gln585. The segment covering Arg588 to Val599 has biased composition (basic and acidic residues). Residues Glu619 to Val628 are compositionally biased toward acidic residues. Composition is skewed to acidic residues over residues Ser976 to Glu990 and Asp1054 to Phe1114. Residues Lys1159 to Asp1174 are compositionally biased toward basic and acidic residues. The span at Leu1329 to Leu1343 shows a compositional bias: basic and acidic residues. Polar residues-rich tracts occupy residues Leu1349–Ile1358 and Glu1441–Pro1453. Residues Ser1454–Gly1464 are compositionally biased toward pro residues. Residues Gln1751–Ala1765 are compositionally biased toward polar residues. Residues Arg1770 to Arg1775 carry the RxxxRR motif motif. Positions Lys1799–Lys1916 constitute an SET domain. Tyr1915 is a binding site for S-adenosyl-L-methionine. A Post-SET domain is found at Val1922 to Asn1938.

This sequence belongs to the class V-like SAM-binding methyltransferase superfamily. In terms of assembly, component of the SET1B/COMPASS complex.

Its subcellular location is the nucleus speckle. It localises to the chromosome. The catalysed reaction is L-lysyl(4)-[histone H3] + 3 S-adenosyl-L-methionine = N(6),N(6),N(6)-trimethyl-L-lysyl(4)-[histone H3] + 3 S-adenosyl-L-homocysteine + 3 H(+). In terms of biological role, histone methyltransferase that specifically methylates 'Lys-4' of histone H3, when part of the SET1 histone methyltransferase (HMT) complex, but not if the neighboring 'Lys-9' residue is already methylated. H3 'Lys-4' methylation represents a specific tag for epigenetic transcriptional activation. In Xenopus laevis (African clawed frog), this protein is Histone-lysine N-methyltransferase SETD1B (setd1b).